A 922-amino-acid chain; its full sequence is uncharacterized protein (922 aa).

Disordered regions lie at residues Ser-459–Asn-522, Ser-539–Gly-627, Gly-649–Phe-668, Gln-692–Leu-835, and Pro-856–Arg-879. Over residues Lys-546–Ser-567 the composition is skewed to basic residues. The segment covering Lys-582–Gln-600 has biased composition (basic and acidic residues). The span at Ser-651 to Ser-660 shows a compositional bias: low complexity. A compositionally biased stretch (basic and acidic residues) spans Gln-692 to Cys-702. Composition is skewed to polar residues over residues Asp-755–Gly-779 and Lys-790–Gln-824. The stretch at Thr-872–Leu-899 forms a coiled coil.

This is an uncharacterized protein from Homo sapiens (Human).